The chain runs to 534 residues: GMP synthase [glutamine-hydrolyzing] (534 aa).

A Glutamine amidotransferase type-1 domain is found at 20–210 (PVLVIDFGAQ…LLVGAGCRPS (191 aa)). The active-site Nucleophile is the C97. Active-site residues include H184 and E186. The GMPS ATP-PPase domain maps to 211 to 408 (WTMINIVEEA…LGLPEDIVWR (198 aa)). 238–244 (SGGVDSA) contacts ATP.

In terms of assembly, homodimer.

The enzyme catalyses XMP + L-glutamine + ATP + H2O = GMP + L-glutamate + AMP + diphosphate + 2 H(+). Its pathway is purine metabolism; GMP biosynthesis; GMP from XMP (L-Gln route): step 1/1. Functionally, catalyzes the synthesis of GMP from XMP. This Parafrankia sp. (strain EAN1pec) protein is GMP synthase [glutamine-hydrolyzing].